A 460-amino-acid chain; its full sequence is Argininosuccinate lyase (460 aa).

This sequence belongs to the lyase 1 family. Argininosuccinate lyase subfamily.

It is found in the cytoplasm. It catalyses the reaction 2-(N(omega)-L-arginino)succinate = fumarate + L-arginine. It functions in the pathway amino-acid biosynthesis; L-arginine biosynthesis; L-arginine from L-ornithine and carbamoyl phosphate: step 3/3. In Alkaliphilus metalliredigens (strain QYMF), this protein is Argininosuccinate lyase.